We begin with the raw amino-acid sequence, 158 residues long: SsrA-binding protein (158 aa).

This sequence belongs to the SmpB family.

It localises to the cytoplasm. Its function is as follows. Required for rescue of stalled ribosomes mediated by trans-translation. Binds to transfer-messenger RNA (tmRNA), required for stable association of tmRNA with ribosomes. tmRNA and SmpB together mimic tRNA shape, replacing the anticodon stem-loop with SmpB. tmRNA is encoded by the ssrA gene; the 2 termini fold to resemble tRNA(Ala) and it encodes a 'tag peptide', a short internal open reading frame. During trans-translation Ala-aminoacylated tmRNA acts like a tRNA, entering the A-site of stalled ribosomes, displacing the stalled mRNA. The ribosome then switches to translate the ORF on the tmRNA; the nascent peptide is terminated with the 'tag peptide' encoded by the tmRNA and targeted for degradation. The ribosome is freed to recommence translation, which seems to be the essential function of trans-translation. The protein is SsrA-binding protein of Pseudoalteromonas atlantica (strain T6c / ATCC BAA-1087).